Consider the following 343-residue polypeptide: N-acetyl-gamma-glutamyl-phosphate reductase (343 aa).

The active site involves Cys-148.

The protein belongs to the NAGSA dehydrogenase family. Type 1 subfamily.

The protein localises to the cytoplasm. The enzyme catalyses N-acetyl-L-glutamate 5-semialdehyde + phosphate + NADP(+) = N-acetyl-L-glutamyl 5-phosphate + NADPH + H(+). It participates in amino-acid biosynthesis; L-arginine biosynthesis; N(2)-acetyl-L-ornithine from L-glutamate: step 3/4. Its function is as follows. Catalyzes the NADPH-dependent reduction of N-acetyl-5-glutamyl phosphate to yield N-acetyl-L-glutamate 5-semialdehyde. The protein is N-acetyl-gamma-glutamyl-phosphate reductase of Caldicellulosiruptor bescii (strain ATCC BAA-1888 / DSM 6725 / KCTC 15123 / Z-1320) (Anaerocellum thermophilum).